A 274-amino-acid polypeptide reads, in one-letter code: 5-deoxy-glucuronate isomerase (274 aa).

Belongs to the isomerase IolB family.

It carries out the reaction 5-deoxy-D-glucuronate = 5-dehydro-2-deoxy-D-gluconate. It functions in the pathway polyol metabolism; myo-inositol degradation into acetyl-CoA; acetyl-CoA from myo-inositol: step 4/7. In terms of biological role, involved in the isomerization of 5-deoxy-glucuronate (5DG) to 5-dehydro-2-deoxy-D-gluconate (DKG or 2-deoxy-5-keto-D-gluconate). This is 5-deoxy-glucuronate isomerase from Geobacillus thermodenitrificans (strain NG80-2).